We begin with the raw amino-acid sequence, 129 residues long: Small ribosomal subunit protein uS8 (129 aa).

Belongs to the universal ribosomal protein uS8 family. As to quaternary structure, part of the 30S ribosomal subunit. Contacts proteins S5 and S12.

Its function is as follows. One of the primary rRNA binding proteins, it binds directly to 16S rRNA central domain where it helps coordinate assembly of the platform of the 30S subunit. The chain is Small ribosomal subunit protein uS8 from Mycoplasma mycoides subsp. mycoides SC (strain CCUG 32753 / NCTC 10114 / PG1).